The following is a 445-amino-acid chain: Gasdermin-A (445 aa).

The interval 1–251 (MTMFENVTRA…VILIQASDVG (251 aa)) is triggers pyroptosis. 9–13 (RALAR) serves as a coordination point for a cardiolipin. 4 beta stranded membrane-spanning segments follow: residues 78–95 (NFGFKNMLDTRVEGDVDV), 99–120 (VKVKGTAGLSQNSTLEVQTLSV), 163–179 (VTLERAGKAEACFSLPF), and 183–197 (LGLQGSINHKEAVTI).

Belongs to the gasdermin family. In terms of assembly, homooligomer; homooligomeric ring-shaped pore complex containing 18-36 subunits when inserted in the membrane. Post-translationally, cleavage by S.pyogenes SpeB relieves autoinhibition by releasing the N-terminal moiety (Gasdermin-A, N-terminal) that initiates pyroptosis. Palmitoylated. As to expression, expressed predominantly in the gastrointestinal tract and, at a lower level, in the skin. Also detected in mammary gland. In the gastrointestinal tract, mainly expressed in differentiated cells, including the differentiated cell layer of esophagus and mucus-secreting pit cells of the gastric epithelium. Down-regulated in gastric cancer cells.

The protein resides in the cytoplasm. The protein localises to the perinuclear region. It localises to the cytosol. It is found in the cell membrane. Its activity is regulated as follows. The full-length protein before cleavage is inactive: intramolecular interactions between N- and C-terminal domains mediate autoinhibition in the absence of activation signal. The intrinsic pyroptosis-inducing activity is carried by the released N-terminal moiety (Gasdermin-A, N-terminal) following cleavage by S.pyogenes effector protein SpeB. This form constitutes the precursor of the pore-forming protein and acts as a sensor of infection: upon infection by S.pyogenes, specifically cleaved by S.pyogenes effector protein SpeB in epithelial cells, releasing the N-terminal moiety (Gasdermin-A, N-terminal) that binds to membranes and forms pores, triggering pyroptosis. Its function is as follows. Pore-forming protein that causes membrane permeabilization and pyroptosis. Released upon cleavage by S.pyogenes effector protein SpeB, and binds to membrane inner leaflet lipids. Homooligomerizes within the membrane and forms pores of 10-15 nanometers (nm) of inner diameter, triggering pyroptosis. Pyroptosis triggers the elimination of the infected skin cell, depriving the pathogen of its protective niche, while inducing an inflammatory response. This ultimately prevents bacterial penetration of the epithelial barrier and a subsequent systemic dissemination of the pathogen. Binds to cardiolipin and other acidic phospholipids, such as phosphatidylserine, which mediate its targeting to the inner leaflet membrane. This chain is Gasdermin-A, found in Homo sapiens (Human).